A 103-amino-acid polypeptide reads, in one-letter code: NADH-quinone oxidoreductase subunit K (103 aa).

3 helical membrane passes run 4–24, 28–48, and 64–84; these read LTSY…GVIA, IFVI…FLIT, and MVIS…ILLF.

It belongs to the complex I subunit 4L family. NDH-1 is composed of 14 different subunits. Subunits NuoA, H, J, K, L, M, N constitute the membrane sector of the complex.

It localises to the cell inner membrane. It catalyses the reaction a quinone + NADH + 5 H(+)(in) = a quinol + NAD(+) + 4 H(+)(out). In terms of biological role, NDH-1 shuttles electrons from NADH, via FMN and iron-sulfur (Fe-S) centers, to quinones in the respiratory chain. The immediate electron acceptor for the enzyme in this species is believed to be ubiquinone. Couples the redox reaction to proton translocation (for every two electrons transferred, four hydrogen ions are translocated across the cytoplasmic membrane), and thus conserves the redox energy in a proton gradient. This is NADH-quinone oxidoreductase subunit K from Aliarcobacter butzleri (strain RM4018) (Arcobacter butzleri).